The chain runs to 261 residues: Uridine-cytidine kinase 2 (261 aa).

Over residues M1 to N16 the composition is skewed to polar residues. A disordered region spans residues M1–G24. The residue at position 2 (A2) is an N-acetylalanine. ATP is bound at residue G27–S35. Residues D84, Y112, H117, R166, R176, and Q184 each contribute to the substrate site. D213 lines the ATP pocket. Residues G240–H261 form a disordered region. At S254 the chain carries Phosphoserine.

It belongs to the uridine kinase family. Homotetramer.

It carries out the reaction uridine + ATP = UMP + ADP + H(+). The enzyme catalyses cytidine + ATP = CMP + ADP + H(+). It functions in the pathway pyrimidine metabolism; CTP biosynthesis via salvage pathway; CTP from cytidine: step 1/3. It participates in pyrimidine metabolism; UMP biosynthesis via salvage pathway; UMP from uridine: step 1/1. Functionally, phosphorylates uridine and cytidine to uridine monophosphate and cytidine monophosphate. Does not phosphorylate deoxyribonucleosides or purine ribonucleosides. Can use ATP or GTP as a phosphate donor. This chain is Uridine-cytidine kinase 2 (Uck2), found in Mus musculus (Mouse).